The chain runs to 609 residues: Kelch domain-containing protein 10 homolog (609 aa).

The segment at 103–146 (ASDLDEEEEEEDDDVDVDVDYGDTDSESEFEEMYSDEWTSSSDE) is disordered. Over residues 104–137 (SDLDEEEEEEDDDVDVDVDYGDTDSESEFEEMYS) the composition is skewed to acidic residues. Kelch repeat units lie at residues 214-277 (HLYS…IHNN), 279-334 (LISH…IHKH), 335-381 (FLYT…RYRH), 389-437 (HIFV…GNRG), 458-508 (EAFI…HSDN), and 510-554 (CMYV…YNDN). The disordered stretch occupies residues 576–609 (LPPQRRRRLDTSQPDPSMLISLYSNPKRARSSTQ).

Interacts with Elongin-C; may be the substrate recognition component of an E3 ubiquitin ligase complex.

Its function is as follows. Activates the Pk92B/DASK1-MAPK signaling cascade. The protein is Kelch domain-containing protein 10 homolog (slim) of Drosophila melanogaster (Fruit fly).